Reading from the N-terminus, the 202-residue chain is IMP cyclohydrolase (202 aa).

This sequence belongs to the archaeal IMP cyclohydrolase family.

The enzyme catalyses IMP + H2O = 5-formamido-1-(5-phospho-D-ribosyl)imidazole-4-carboxamide. It functions in the pathway purine metabolism; IMP biosynthesis via de novo pathway; IMP from 5-formamido-1-(5-phospho-D-ribosyl)imidazole-4-carboxamide: step 1/1. In terms of biological role, catalyzes the cyclization of 5-formylamidoimidazole-4-carboxamide ribonucleotide to IMP. In Methanosphaera stadtmanae (strain ATCC 43021 / DSM 3091 / JCM 11832 / MCB-3), this protein is IMP cyclohydrolase.